A 333-amino-acid chain; its full sequence is DNA-directed RNA polymerase subunit alpha (333 aa).

The tract at residues 1–234 (MQSSVNEFLT…QQLAAFVDLK (234 aa)) is alpha N-terminal domain (alpha-NTD). The segment at 248–333 (IDPILLRPVD…SLKKDDKATA (86 aa)) is alpha C-terminal domain (alpha-CTD).

This sequence belongs to the RNA polymerase alpha chain family. As to quaternary structure, homodimer. The RNAP catalytic core consists of 2 alpha, 1 beta, 1 beta' and 1 omega subunit. When a sigma factor is associated with the core the holoenzyme is formed, which can initiate transcription.

The catalysed reaction is RNA(n) + a ribonucleoside 5'-triphosphate = RNA(n+1) + diphosphate. DNA-dependent RNA polymerase catalyzes the transcription of DNA into RNA using the four ribonucleoside triphosphates as substrates. This is DNA-directed RNA polymerase subunit alpha from Pseudomonas aeruginosa (strain UCBPP-PA14).